Reading from the N-terminus, the 258-residue chain is Indole-3-glycerol phosphate synthase (258 aa).

This sequence belongs to the TrpC family.

The catalysed reaction is 1-(2-carboxyphenylamino)-1-deoxy-D-ribulose 5-phosphate + H(+) = (1S,2R)-1-C-(indol-3-yl)glycerol 3-phosphate + CO2 + H2O. It functions in the pathway amino-acid biosynthesis; L-tryptophan biosynthesis; L-tryptophan from chorismate: step 4/5. In Legionella pneumophila (strain Paris), this protein is Indole-3-glycerol phosphate synthase.